The primary structure comprises 306 residues: UDP-3-O-acyl-N-acetylglucosamine deacetylase (306 aa).

Zn(2+)-binding residues include His-79, His-238, and Asp-242. His-265 acts as the Proton donor in catalysis.

This sequence belongs to the LpxC family. Requires Zn(2+) as cofactor.

It catalyses the reaction a UDP-3-O-[(3R)-3-hydroxyacyl]-N-acetyl-alpha-D-glucosamine + H2O = a UDP-3-O-[(3R)-3-hydroxyacyl]-alpha-D-glucosamine + acetate. Its pathway is glycolipid biosynthesis; lipid IV(A) biosynthesis; lipid IV(A) from (3R)-3-hydroxytetradecanoyl-[acyl-carrier-protein] and UDP-N-acetyl-alpha-D-glucosamine: step 2/6. In terms of biological role, catalyzes the hydrolysis of UDP-3-O-myristoyl-N-acetylglucosamine to form UDP-3-O-myristoylglucosamine and acetate, the committed step in lipid A biosynthesis. The polypeptide is UDP-3-O-acyl-N-acetylglucosamine deacetylase (Shewanella pealeana (strain ATCC 700345 / ANG-SQ1)).